The sequence spans 192 residues: Peptidyl-tRNA hydrolase (192 aa).

Tyrosine 17 is a tRNA binding site. Residue histidine 22 is the Proton acceptor of the active site. 3 residues coordinate tRNA: tyrosine 68, asparagine 70, and asparagine 116.

It belongs to the PTH family. Monomer.

The protein resides in the cytoplasm. The catalysed reaction is an N-acyl-L-alpha-aminoacyl-tRNA + H2O = an N-acyl-L-amino acid + a tRNA + H(+). In terms of biological role, hydrolyzes ribosome-free peptidyl-tRNAs (with 1 or more amino acids incorporated), which drop off the ribosome during protein synthesis, or as a result of ribosome stalling. Functionally, catalyzes the release of premature peptidyl moieties from peptidyl-tRNA molecules trapped in stalled 50S ribosomal subunits, and thus maintains levels of free tRNAs and 50S ribosomes. This chain is Peptidyl-tRNA hydrolase, found in Mycolicibacterium vanbaalenii (strain DSM 7251 / JCM 13017 / BCRC 16820 / KCTC 9966 / NRRL B-24157 / PYR-1) (Mycobacterium vanbaalenii).